Here is a 320-residue protein sequence, read N- to C-terminus: Biotin synthase (320 aa).

One can recognise a Radical SAM core domain in the interval 43–270 (GAVQKSQLLS…KSWVRLSAGR (228 aa)). Residues cysteine 58, cysteine 62, and cysteine 65 each contribute to the [4Fe-4S] cluster site. [2Fe-2S] cluster is bound by residues cysteine 102, cysteine 133, cysteine 193, and arginine 265.

It belongs to the radical SAM superfamily. Biotin synthase family. Homodimer. The cofactor is [4Fe-4S] cluster. [2Fe-2S] cluster serves as cofactor.

It carries out the reaction (4R,5S)-dethiobiotin + (sulfur carrier)-SH + 2 reduced [2Fe-2S]-[ferredoxin] + 2 S-adenosyl-L-methionine = (sulfur carrier)-H + biotin + 2 5'-deoxyadenosine + 2 L-methionine + 2 oxidized [2Fe-2S]-[ferredoxin]. It participates in cofactor biosynthesis; biotin biosynthesis; biotin from 7,8-diaminononanoate: step 2/2. Its function is as follows. Catalyzes the conversion of dethiobiotin (DTB) to biotin by the insertion of a sulfur atom into dethiobiotin via a radical-based mechanism. The chain is Biotin synthase from Hyphomonas neptunium (strain ATCC 15444).